We begin with the raw amino-acid sequence, 300 residues long: Lysenin-related protein 1 (300 aa).

The segment at 12-35 (EEIEVDVVSVWKEGYAYENRGNSS) is N-terminal cap domain. Residues 36–109 (VQQKITMTKG…SQVIEHTVTI (74 aa)) form a beta-hairpin domain region. The segment at 110-158 (PPNKKFTRWKLNADVGGTGIEYMYLIDEVTAIGADLTIPEVNKSRAKIL) is N-terminal cap domain. The interval 159-299 (VGRQIHLGET…EDKWILEVVN (141 aa)) is C-terminal receptor-binding domain. An N-(acyl)-sphingosylphosphocholine-binding residues include Lys187, Ser229, Tyr235, and Tyr284. Cys274 and Cys285 are oxidised to a cystine.

This sequence belongs to the lysenin family. Binds to sphingomyelin as a monomer by using its C-terminal domain. Forms a nonamer when sphingomyelin/LRP-1 ratio is lower than ca 500. Oligomerization, but not binding, is influenced by the fluidity of sphingomyelin. Expressed by coelomocytes.

It is found in the secreted. The protein localises to the target cell membrane. In terms of biological role, pore-forming toxin that specifically binds sphingomyelin in the plasma membrane of various cells. Has hemolytic activity. Binding and hemolytic activities of this toxin are 10 times less than those of lysenin and lysenin-related protein 2. In Eisenia fetida (Red wiggler worm), this protein is Lysenin-related protein 1.